The sequence spans 72 residues: AICVSQAITYTDCTESGQNLCLCEGSNVCGKGNKCILGSNGKGNQCVTGEGTPNPESHNNGDFEEIPEEYLQ.

Residues Ala1–Ala7 form the signal peptide. The segment at Ile8 to Tyr10 is interaction with thrombin active site. Cystine bridges form between Cys13–Cys21, Cys23–Cys35, and Cys29–Cys46. The disordered stretch occupies residues Val47–Gln72. Residue Thr52 is glycosylated (O-linked (GalNAc...) threonine). Residues Asp62–Gln72 form an interaction with fibrinogen-binding exosite of thrombin region. The segment covering Asp62–Gln72 has biased composition (acidic residues). Tyr70 carries the post-translational modification Sulfotyrosine.

The protein belongs to the protease inhibitor I14 (hirudin) family.

Its subcellular location is the secreted. Hirudin is a potent thrombin-specific protease inhibitor. It forms a stable non-covalent complex with alpha-thrombin, thereby abolishing its ability to cleave fibrinogen. The polypeptide is Hirudin variant-2 (Hirudo medicinalis (Medicinal leech)).